The sequence spans 295 residues: Acetylglutamate kinase (295 aa).

Substrate-binding positions include 64–65 (GG), Arg86, and Asn190.

The protein belongs to the acetylglutamate kinase family. ArgB subfamily.

The protein localises to the cytoplasm. It catalyses the reaction N-acetyl-L-glutamate + ATP = N-acetyl-L-glutamyl 5-phosphate + ADP. Its pathway is amino-acid biosynthesis; L-arginine biosynthesis; N(2)-acetyl-L-ornithine from L-glutamate: step 2/4. Functionally, catalyzes the ATP-dependent phosphorylation of N-acetyl-L-glutamate. This Pelotomaculum thermopropionicum (strain DSM 13744 / JCM 10971 / SI) protein is Acetylglutamate kinase.